The primary structure comprises 157 residues: DNA gyrase inhibitor (157 aa).

Belongs to the DNA gyrase inhibitor family. As to quaternary structure, interacts with DNA gyrase.

It localises to the cytoplasm. In terms of biological role, inhibits the supercoiling activity of DNA gyrase. Acts by inhibiting DNA gyrase at an early step, prior to (or at the step of) binding of DNA by the gyrase. It protects cells against toxins that target DNA gyrase, by inhibiting activity of these toxins and reducing the formation of lethal double-strand breaks in the cell. The chain is DNA gyrase inhibitor from Citrobacter rodentium (strain ICC168) (Citrobacter freundii biotype 4280).